The chain runs to 20 residues: Toxin b subunit beta (20 aa).

Toxin b is a heterodimer composed of toxin alpha and toxin beta. As to expression, expressed by the venom gland.

The protein localises to the secreted. Its function is as follows. Binds to sodium channels (Nav) and affects the channel activation process. This is Toxin b subunit beta from Androctonus crassicauda (Arabian fat-tailed scorpion).